A 264-amino-acid polypeptide reads, in one-letter code: Short chain dehydrogenase/reductase dmxR18 (264 aa).

NADP(+) is bound by residues isoleucine 24, aspartate 70, asparagine 97, and arginine 130. Active-site proton donor residues include serine 146 and serine 147. NADP(+) is bound by residues tyrosine 161, lysine 165, and threonine 196. The active-site Proton acceptor is the tyrosine 161. The Lowers pKa of active site Tyr role is filled by lysine 165.

This sequence belongs to the short-chain dehydrogenases/reductases (SDR) family.

It catalyses the reaction 3,8,9,10-tetrahydroxy-6-methyl-1,4-dihydroanthracen-1-one + NADPH + H(+) = (3R)-3,8,9,10-tetrahydroxy-6-methyl-1,2,3,4-tetrahydroanthracen-1-one + NADP(+). It participates in secondary metabolite biosynthesis. Its function is as follows. Short chain dehydrogenase/reductase; part of the gene cluster that mediates the biosynthesis of the dimeric xanthones cryptosporioptides. The pathway begins with the synthesis of atrochrysone thioester by the polyketide synthase dmx-nrPKS. The atrochrysone carboxyl ACP thioesterase dmxR1 then breaks the thioester bond and releases the atrochrysone carboxylic acid from dmx-nrPKS. Atrochrysone carboxylic acid is decarboxylated by the decarboxylase dmxR15, and oxidized by the anthrone oxygenase dmxR16 to yield emodin. Emodin is then reduced to emodin hydroquinone by the oxidoreductase dmxR7. A-ring reduction by the short chain dehydrogenase dmxR18, dehydration by the scytalone dehydratase-like protein dmxR17 and probable spontaneous re-oxidation, results in overall deoxygenation to chrysophanol. Baeyer-Villiger oxidation by the Baeyer-Villiger monooxygenase (BVMO) dmxR6 then yields monodictylactone in equilibrium with monodictyphenone. In the case of the cryptosporioptides biosynthesis, monodictylactone is reduced at C-12 to an alcohol (by the short chain dehydrogenases dmxR12 or dmxR8) and hydroxylated at C-5 by dmxR9, yielding the electron-rich aromatic which could eliminate H(2)O to form the ortho-quinonemethide, followed by tautomerisation to paraquinone and complete the formal reduction to produce the 10-methylgroup. Conjugate addition of C-4a-OH to the resulting paraquinone by the monooxygenase dmxR10 then gives cyclohexadienone, which is then reduced at C-5 by the short chain dehydrogenase dmxR3 to give the dihydroxanthone. The 6,7-epoxide in the cryptosporioptides could be introduced by the cytochrome P450 monooxygenase dmxL3. The highly reducing PKS dmxL2 manufactures butyrate, which is further carboxylated by dmxL1 to form ethylmalonate. It is not yet clear whether the carboxylation occurs while the butyrate is attached to the ACP of dmxL2, but this unusual fungal metabolite could then be esterified to O-5 by the O-acetyltransferase dmxR13. Finally, dimerization performed by dmxR5 gives the observed dimers cryptosporioptides A, B and C as the final products of the pathway. The chain is Short chain dehydrogenase/reductase dmxR18 from Cryptosporiopsis sp. (strain 8999).